We begin with the raw amino-acid sequence, 566 residues long: Putative ABC transporter ATP-binding protein lp_0149 (566 aa).

2 ABC transporter domains span residues 6-247 and 302-536; these read ISFK…GLRE and LAIE…ASLA. ATP contacts are provided by residues 40-47 and 335-342; these read GPSGSGKS and GQNGTGKS.

Belongs to the ABC transporter superfamily.

It is found in the cell membrane. In terms of biological role, probably part of an ABC transporter complex. Responsible for energy coupling to the transport system. The sequence is that of Putative ABC transporter ATP-binding protein lp_0149 from Lactiplantibacillus plantarum (strain ATCC BAA-793 / NCIMB 8826 / WCFS1) (Lactobacillus plantarum).